A 176-amino-acid chain; its full sequence is Inner membrane-spanning protein YciB (176 aa).

Helical transmembrane passes span 3–23, 49–69, 72–92, 118–138, and 149–169; these read FLFD…WGIF, TMLW…LVLH, KFIQ…LVAA, KLNL…LYVV, and FKLF…SLWL.

Belongs to the YciB family.

It localises to the cell inner membrane. Its function is as follows. Plays a role in cell envelope biogenesis, maintenance of cell envelope integrity and membrane homeostasis. The chain is Inner membrane-spanning protein YciB from Burkholderia mallei (strain NCTC 10247).